The following is a 1216-amino-acid chain: Coatomer subunit alpha-1 (1216 aa).

8 WD repeats span residues 7–48 (TKSN…DRFD), 49–88 (EHEGPVRGVHFHNSQPLFVSGGDDYKIKVWNYKNHRCLFT), 91–132 (GHLD…SVLT), 133–172 (GHNHYVMCASFHPKEDLVVSASLDQTVRVWDIGALRKKTV), 202–241 (GHDRGVNWAAFHPTLPLIVSGADDRQVKLWRMNETKAWEV), 246–285 (GHMNNVSSVMFHAKQDIIVSNSEDKSIRVWDATKRTGLQT), 288–326 (REHDRFWILAVHPEMNLLAAGHDSGMIVFKLERERPAFA), and 363–404 (SLNQ…VGRS).

As to quaternary structure, oligomeric complex that consists of at least the alpha, beta, beta', gamma, delta, epsilon and zeta subunits.

It localises to the cytoplasm. The protein localises to the golgi apparatus membrane. The protein resides in the cytoplasmic vesicle. It is found in the COPI-coated vesicle membrane. Its function is as follows. The coatomer is a cytosolic protein complex that binds to dilysine motifs and reversibly associates with Golgi non-clathrin-coated vesicles, which further mediate biosynthetic protein transport from the ER, via the Golgi up to the trans Golgi network. Coatomer complex is required for budding from Golgi membranes, and is essential for the retrograde Golgi-to-ER transport of dilysine-tagged proteins. This chain is Coatomer subunit alpha-1, found in Arabidopsis thaliana (Mouse-ear cress).